Reading from the N-terminus, the 137-residue chain is Nuclear transition protein 2 (137 aa).

Residues 1–21 (MDTKTQSLPNAHTQPHSNSGP) are compositionally biased toward polar residues. Positions 1-137 (MDTKTQSLPN…KRRSSGRKYN (137 aa)) are disordered. Residues His12, His16, His24, Cys29, Cys31, Cys35, and Cys38 each contribute to the Zn(2+) site. A compositionally biased stretch (low complexity) spans 22–74 (QSHACNQCSCSHHCQNCSQSCDRSQSCSRSRSSSQSPTGHRSLPGHQSQSLSP). The segment covering 78–91 (PRHRKRAMHSHRCP) has biased composition (basic residues). A Nuclear localization signal motif is present at residues 110 to 118 (GKANKRKGI). Over residues 126–137 (KTKRRSSGRKYN) the composition is skewed to basic residues. Position 132 is a phosphoserine (Ser132).

The protein belongs to the nuclear transition protein 2 family. In terms of tissue distribution, testis. Expression is restricted to haploid germ cells.

The protein resides in the nucleus. It is found in the nucleolus. Its subcellular location is the chromosome. In terms of biological role, plays a key role in the replacement of histones to protamine in the elongating spermatids of mammals. In condensing spermatids, loaded onto the nucleosomes, where it promotes the recruitment and processing of protamines, which are responsible for histone eviction. The sequence is that of Nuclear transition protein 2 (TNP2) from Sus scrofa (Pig).